The sequence spans 352 residues: Protein RecA (352 aa).

66 to 73 is an ATP binding site; that stretch reads GPESSGKT. Residues 330–352 form a disordered region; that stretch reads TKDDSKVATVDKANEEQAAEPVQ.

Belongs to the RecA family.

The protein resides in the cytoplasm. Can catalyze the hydrolysis of ATP in the presence of single-stranded DNA, the ATP-dependent uptake of single-stranded DNA by duplex DNA, and the ATP-dependent hybridization of homologous single-stranded DNAs. It interacts with LexA causing its activation and leading to its autocatalytic cleavage. The chain is Protein RecA from Psychrobacter cryohalolentis (strain ATCC BAA-1226 / DSM 17306 / VKM B-2378 / K5).